A 706-amino-acid chain; its full sequence is Elongation factor G (706 aa).

Residues 15–291 (LKTRNIGISA…GVLDYLASPV (277 aa)) enclose the tr-type G domain. GTP is bound by residues 24 to 31 (AHIDSGKT), 91 to 95 (DTPGH), and 145 to 148 (NKLD).

Belongs to the TRAFAC class translation factor GTPase superfamily. Classic translation factor GTPase family. EF-G/EF-2 subfamily.

It is found in the cytoplasm. Functionally, catalyzes the GTP-dependent ribosomal translocation step during translation elongation. During this step, the ribosome changes from the pre-translocational (PRE) to the post-translocational (POST) state as the newly formed A-site-bound peptidyl-tRNA and P-site-bound deacylated tRNA move to the P and E sites, respectively. Catalyzes the coordinated movement of the two tRNA molecules, the mRNA and conformational changes in the ribosome. In Leptospira interrogans serogroup Icterohaemorrhagiae serovar copenhageni (strain Fiocruz L1-130), this protein is Elongation factor G.